The chain runs to 417 residues: Probable cysteine desulfurase (417 aa).

At Lys-233 the chain carries N6-(pyridoxal phosphate)lysine. Cys-373 functions as the Cysteine persulfide intermediate in the catalytic mechanism.

The protein belongs to the class-V pyridoxal-phosphate-dependent aminotransferase family. Csd subfamily. Pyridoxal 5'-phosphate is required as a cofactor.

It catalyses the reaction (sulfur carrier)-H + L-cysteine = (sulfur carrier)-SH + L-alanine. Its function is as follows. Catalyzes the removal of elemental sulfur and selenium atoms from L-cysteine, L-cystine, L-selenocysteine, and L-selenocystine to produce L-alanine. The protein is Probable cysteine desulfurase (csd) of Mycobacterium tuberculosis (strain CDC 1551 / Oshkosh).